Consider the following 447-residue polypeptide: Biotin carboxylase (447 aa).

The region spanning 1 to 447 (MKFDKILIAN…STSFVQEMNK (447 aa)) is the Biotin carboxylation domain. ATP is bound by residues Lys-117, Lys-159, 165–166 (GG), 201–204 (EKFI), and His-209. The ATP-grasp domain maps to 121–318 (KETMQKAGVP…LLVEQIRIAQ (198 aa)). Residue Lys-238 coordinates hydrogencarbonate. Positions 276 and 289 each coordinate ATP. 3 residues coordinate Mg(2+): Glu-276, Glu-289, and Asn-291. Positions 276, 289, and 291 each coordinate Mn(2+). Hydrogencarbonate contacts are provided by Arg-293, Val-296, and Arg-339. The active site involves Arg-293. Arg-339 is a binding site for biotin.

As to quaternary structure, acetyl-CoA carboxylase is a heterohexamer of biotin carboxyl carrier protein, biotin carboxylase and the two subunits of carboxyl transferase in a 2:2 complex. The cofactor is Mg(2+). Mn(2+) is required as a cofactor.

It catalyses the reaction N(6)-biotinyl-L-lysyl-[protein] + hydrogencarbonate + ATP = N(6)-carboxybiotinyl-L-lysyl-[protein] + ADP + phosphate + H(+). It participates in lipid metabolism; malonyl-CoA biosynthesis; malonyl-CoA from acetyl-CoA: step 1/1. This protein is a component of the acetyl coenzyme A carboxylase complex; first, biotin carboxylase catalyzes the carboxylation of the carrier protein and then the transcarboxylase transfers the carboxyl group to form malonyl-CoA. This Nostoc sp. (strain PCC 7120 / SAG 25.82 / UTEX 2576) protein is Biotin carboxylase (accC).